A 569-amino-acid chain; its full sequence is Laccase-14 (569 aa).

A signal peptide spans 1 to 33 (MEFKLNIPNTIIKTLQTIVFFLFVLLAFQIAEA). 2 Plastocyanin-like domains span residues 41 to 157 (KIKS…PKRG) and 167 to 320 (REIP…YKGD). Asparagine 87 carries N-linked (GlcNAc...) asparagine glycosylation. Residues histidine 91, histidine 93, histidine 136, and histidine 138 each contribute to the Cu cation site. 7 N-linked (GlcNAc...) asparagine glycosylation sites follow: asparagine 190, asparagine 249, asparagine 336, asparagine 374, asparagine 395, asparagine 430, and asparagine 452. The Plastocyanin-like 3 domain maps to 420–553 (DFPRNPPTKF…NTVFIVKDGP (134 aa)). Histidine 470, histidine 473, histidine 475, histidine 532, cysteine 533, histidine 534, histidine 538, and methionine 543 together coordinate Cu cation.

Belongs to the multicopper oxidase family. Cu cation is required as a cofactor. As to expression, expressed at low levels in flowers and siliques.

It localises to the secreted. The protein localises to the extracellular space. The protein resides in the apoplast. The catalysed reaction is 4 hydroquinone + O2 = 4 benzosemiquinone + 2 H2O. In terms of biological role, lignin degradation and detoxification of lignin-derived products. The polypeptide is Laccase-14 (LAC14) (Arabidopsis thaliana (Mouse-ear cress)).